A 294-amino-acid chain; its full sequence is Proteasome subunit beta (294 aa).

The propeptide at 1–65 (MTADRPALRT…MESGDLAPHG (65 aa)) is removed in mature form; by autocatalysis. Thr66 (nucleophile) is an active-site residue.

It belongs to the peptidase T1B family. In terms of assembly, the 20S proteasome core is composed of 14 alpha and 14 beta subunits that assemble into four stacked heptameric rings, resulting in a barrel-shaped structure. The two inner rings, each composed of seven catalytic beta subunits, are sandwiched by two outer rings, each composed of seven alpha subunits. The catalytic chamber with the active sites is on the inside of the barrel. Has a gated structure, the ends of the cylinder being occluded by the N-termini of the alpha-subunits. Is capped by the proteasome-associated ATPase, ARC.

The protein resides in the cytoplasm. It catalyses the reaction Cleavage of peptide bonds with very broad specificity.. It functions in the pathway protein degradation; proteasomal Pup-dependent pathway. The formation of the proteasomal ATPase ARC-20S proteasome complex, likely via the docking of the C-termini of ARC into the intersubunit pockets in the alpha-rings, may trigger opening of the gate for substrate entry. Interconversion between the open-gate and close-gate conformations leads to a dynamic regulation of the 20S proteasome proteolysis activity. Functionally, component of the proteasome core, a large protease complex with broad specificity involved in protein degradation. The chain is Proteasome subunit beta from Rhodococcus jostii (strain RHA1).